The primary structure comprises 549 residues: Arginine--tRNA ligase (549 aa).

Positions 132–142 (ANPTGPLHLAH) match the 'HIGH' region motif.

It belongs to the class-I aminoacyl-tRNA synthetase family. In terms of assembly, monomer.

It is found in the cytoplasm. It carries out the reaction tRNA(Arg) + L-arginine + ATP = L-arginyl-tRNA(Arg) + AMP + diphosphate. The chain is Arginine--tRNA ligase from Renibacterium salmoninarum (strain ATCC 33209 / DSM 20767 / JCM 11484 / NBRC 15589 / NCIMB 2235).